A 404-amino-acid chain; its full sequence is Probable tRNA sulfurtransferase (404 aa).

The THUMP domain occupies 60 to 165 (QPVAESLKQI…EEAAYISYET (106 aa)). ATP is bound by residues 183–184 (ML), 208–209 (HF), R265, G287, and Q296.

It belongs to the ThiI family.

The protein localises to the cytoplasm. It carries out the reaction [ThiI sulfur-carrier protein]-S-sulfanyl-L-cysteine + a uridine in tRNA + 2 reduced [2Fe-2S]-[ferredoxin] + ATP + H(+) = [ThiI sulfur-carrier protein]-L-cysteine + a 4-thiouridine in tRNA + 2 oxidized [2Fe-2S]-[ferredoxin] + AMP + diphosphate. It catalyses the reaction [ThiS sulfur-carrier protein]-C-terminal Gly-Gly-AMP + S-sulfanyl-L-cysteinyl-[cysteine desulfurase] + AH2 = [ThiS sulfur-carrier protein]-C-terminal-Gly-aminoethanethioate + L-cysteinyl-[cysteine desulfurase] + A + AMP + 2 H(+). The protein operates within cofactor biosynthesis; thiamine diphosphate biosynthesis. Functionally, catalyzes the ATP-dependent transfer of a sulfur to tRNA to produce 4-thiouridine in position 8 of tRNAs, which functions as a near-UV photosensor. Also catalyzes the transfer of sulfur to the sulfur carrier protein ThiS, forming ThiS-thiocarboxylate. This is a step in the synthesis of thiazole, in the thiamine biosynthesis pathway. The sulfur is donated as persulfide by IscS. This chain is Probable tRNA sulfurtransferase, found in Streptococcus gordonii (strain Challis / ATCC 35105 / BCRC 15272 / CH1 / DL1 / V288).